The following is a 200-amino-acid chain: dTTP/UTP pyrophosphatase (200 aa).

The active-site Proton acceptor is Asp-81.

It belongs to the Maf family. YhdE subfamily. It depends on a divalent metal cation as a cofactor.

Its subcellular location is the cytoplasm. The enzyme catalyses dTTP + H2O = dTMP + diphosphate + H(+). The catalysed reaction is UTP + H2O = UMP + diphosphate + H(+). In terms of biological role, nucleoside triphosphate pyrophosphatase that hydrolyzes dTTP and UTP. May have a dual role in cell division arrest and in preventing the incorporation of modified nucleotides into cellular nucleic acids. In Cupriavidus pinatubonensis (strain JMP 134 / LMG 1197) (Cupriavidus necator (strain JMP 134)), this protein is dTTP/UTP pyrophosphatase.